The primary structure comprises 603 residues: NADH-ubiquinone oxidoreductase chain 5 (603 aa).

The next 16 membrane-spanning stretches (helical) occupy residues 4-24, 38-58, 87-107, 117-137, 140-160, 171-191, 211-233, 241-261, 273-293, 301-320, 331-351, 366-386, 409-429, 457-477, 488-508, and 583-603; these read LPTLTLISLIILTSPIMLSPL, MAVSYAFMVSMVPAMIFMHSG, LIFMPVALFVTWSIMEFSLWY, FFKYLLLFLITMIILITANNL, LFIGWEGVGIMSFLLIGWWYG, AMIYNRIGDVGFVAAMAWFLL, LPLTGLLLAAMGKSAQFGLHPWL, TPVSALLHSSTMVVAGVFLLI, ILTLTLCVGAITTLFTAICAL, IIAFSTSSQLGLMMVTIGIN, THAFFKAMLFMCSGSIIHSLG, LPFTTTALIIGSLALTGMPFL, LLITFIATSMTAVYSTRIIFF, LMLGSIFAGFLISSNLPPTTV, FMALAVTLLGFALAIELSSFT, and MIKLYFLSFLISLTLGLLLII.

Belongs to the complex I subunit 5 family.

Its subcellular location is the mitochondrion inner membrane. The catalysed reaction is a ubiquinone + NADH + 5 H(+)(in) = a ubiquinol + NAD(+) + 4 H(+)(out). In terms of biological role, core subunit of the mitochondrial membrane respiratory chain NADH dehydrogenase (Complex I) that is believed to belong to the minimal assembly required for catalysis. Complex I functions in the transfer of electrons from NADH to the respiratory chain. The immediate electron acceptor for the enzyme is believed to be ubiquinone. This Dugong dugon (Dugong) protein is NADH-ubiquinone oxidoreductase chain 5 (MT-ND5).